Consider the following 322-residue polypeptide: Cytochrome c biogenesis protein CcsA (322 aa).

7 helical membrane-spanning segments follow: residues 9 to 29 (IFTH…LITL), 44 to 64 (GMIV…IYSG), 71 to 91 (LYES…VPYF), 143 to 163 (MILS…LLVI), 226 to 246 (VISL…VWAN), 255 to 275 (WDPK…YLHI), and 287 to 307 (AIVA…VNLL).

The protein belongs to the CcmF/CycK/Ccl1/NrfE/CcsA family. May interact with Ccs1.

The protein localises to the plastid. Its subcellular location is the chloroplast thylakoid membrane. Functionally, required during biogenesis of c-type cytochromes (cytochrome c6 and cytochrome f) at the step of heme attachment. The sequence is that of Cytochrome c biogenesis protein CcsA from Lactuca sativa (Garden lettuce).